We begin with the raw amino-acid sequence, 369 residues long: tRNA pseudouridine synthase D (369 aa).

Asp80 acts as the Nucleophile in catalysis. One can recognise a TRUD domain in the interval 156-318; sequence GIPNWFGEQR…LKQERRALRL (163 aa).

It belongs to the pseudouridine synthase TruD family.

The catalysed reaction is uridine(13) in tRNA = pseudouridine(13) in tRNA. In terms of biological role, responsible for synthesis of pseudouridine from uracil-13 in transfer RNAs. The protein is tRNA pseudouridine synthase D of Xanthomonas axonopodis pv. citri (strain 306).